Reading from the N-terminus, the 390-residue chain is Tryptophan synthase beta chain (390 aa).

Lys-90 is subject to N6-(pyridoxal phosphate)lysine.

It belongs to the TrpB family. As to quaternary structure, tetramer of two alpha and two beta chains. Pyridoxal 5'-phosphate serves as cofactor.

The enzyme catalyses (1S,2R)-1-C-(indol-3-yl)glycerol 3-phosphate + L-serine = D-glyceraldehyde 3-phosphate + L-tryptophan + H2O. Its pathway is amino-acid biosynthesis; L-tryptophan biosynthesis; L-tryptophan from chorismate: step 5/5. In terms of biological role, the beta subunit is responsible for the synthesis of L-tryptophan from indole and L-serine. This chain is Tryptophan synthase beta chain, found in Bacteroides fragilis (strain ATCC 25285 / DSM 2151 / CCUG 4856 / JCM 11019 / LMG 10263 / NCTC 9343 / Onslow / VPI 2553 / EN-2).